The sequence spans 324 residues: Beta-ketoacyl-[acyl-carrier-protein] synthase III (324 aa).

Residues cysteine 113 and histidine 251 contribute to the active site. Residues 252 to 256 (QANKR) are ACP-binding. Asparagine 281 is a catalytic residue.

Belongs to the thiolase-like superfamily. FabH family. In terms of assembly, homodimer.

The protein localises to the cytoplasm. The enzyme catalyses malonyl-[ACP] + acetyl-CoA + H(+) = 3-oxobutanoyl-[ACP] + CO2 + CoA. It participates in lipid metabolism; fatty acid biosynthesis. Functionally, catalyzes the condensation reaction of fatty acid synthesis by the addition to an acyl acceptor of two carbons from malonyl-ACP. Catalyzes the first condensation reaction which initiates fatty acid synthesis and may therefore play a role in governing the total rate of fatty acid production. Possesses both acetoacetyl-ACP synthase and acetyl transacylase activities. Its substrate specificity determines the biosynthesis of branched-chain and/or straight-chain of fatty acids. This Bartonella henselae (strain ATCC 49882 / DSM 28221 / CCUG 30454 / Houston 1) (Rochalimaea henselae) protein is Beta-ketoacyl-[acyl-carrier-protein] synthase III.